Reading from the N-terminus, the 286-residue chain is Ribosomal RNA small subunit methyltransferase A (286 aa).

Positions 28, 30, 55, 77, 103, and 123 each coordinate S-adenosyl-L-methionine.

The protein belongs to the class I-like SAM-binding methyltransferase superfamily. rRNA adenine N(6)-methyltransferase family. RsmA subfamily.

The protein resides in the cytoplasm. The enzyme catalyses adenosine(1518)/adenosine(1519) in 16S rRNA + 4 S-adenosyl-L-methionine = N(6)-dimethyladenosine(1518)/N(6)-dimethyladenosine(1519) in 16S rRNA + 4 S-adenosyl-L-homocysteine + 4 H(+). In terms of biological role, specifically dimethylates two adjacent adenosines (A1518 and A1519) in the loop of a conserved hairpin near the 3'-end of 16S rRNA in the 30S particle. May play a critical role in biogenesis of 30S subunits. The chain is Ribosomal RNA small subunit methyltransferase A from Bradyrhizobium sp. (strain ORS 278).